Here is a 322-residue protein sequence, read N- to C-terminus: Uracil-DNA glycosylase (322 aa).

The active-site Proton acceptor is the Asp142.

This sequence belongs to the uracil-DNA glycosylase (UDG) superfamily. UNG family.

The protein resides in the mitochondrion. The protein localises to the nucleus. It carries out the reaction Hydrolyzes single-stranded DNA or mismatched double-stranded DNA and polynucleotides, releasing free uracil.. Its function is as follows. Excises uracil residues from the DNA which can arise as a result of misincorporation of dUMP residues by DNA polymerase or due to deamination of cytosine. The chain is Uracil-DNA glycosylase (ung1) from Schizosaccharomyces pombe (strain 972 / ATCC 24843) (Fission yeast).